The primary structure comprises 207 residues: MTETDGQKDNNQDTAQAAADPVVSKPYIMPDDPEEGSNEALVREAADARDKMLRTLAEMENLRKRTQKEVADARTYGVTSFARDVLDIADNLQRALDAVPAEARANAEPGLKALIEGVELTERSLLNALEKNGVKKFDPKGQKFDPNFQQAMYEVPDPSVPAGTVVQVVQAGFTIGDRVLRPALVGVAKGGAKAAPSDGGSETGNLN.

Positions 1-11 (MTETDGQKDNN) are enriched in basic and acidic residues. Positions 1–39 (MTETDGQKDNNQDTAQAAADPVVSKPYIMPDDPEEGSNE) are disordered.

It belongs to the GrpE family. In terms of assembly, homodimer.

It is found in the cytoplasm. In terms of biological role, participates actively in the response to hyperosmotic and heat shock by preventing the aggregation of stress-denatured proteins, in association with DnaK and GrpE. It is the nucleotide exchange factor for DnaK and may function as a thermosensor. Unfolded proteins bind initially to DnaJ; upon interaction with the DnaJ-bound protein, DnaK hydrolyzes its bound ATP, resulting in the formation of a stable complex. GrpE releases ADP from DnaK; ATP binding to DnaK triggers the release of the substrate protein, thus completing the reaction cycle. Several rounds of ATP-dependent interactions between DnaJ, DnaK and GrpE are required for fully efficient folding. The protein is Protein GrpE of Rhodopseudomonas palustris (strain TIE-1).